The following is a 297-amino-acid chain: Acetyl-coenzyme A carboxylase carboxyl transferase subunit beta (297 aa).

The region spanning 27–296 (LWHKCPSCEA…PVETSQVTAK (270 aa)) is the CoA carboxyltransferase N-terminal domain. Zn(2+)-binding residues include cysteine 31, cysteine 34, cysteine 50, and cysteine 53. A C4-type zinc finger spans residues 31 to 53 (CPSCEAVLYRPELEKTLDVCPKC).

Belongs to the AccD/PCCB family. As to quaternary structure, acetyl-CoA carboxylase is a heterohexamer composed of biotin carboxyl carrier protein (AccB), biotin carboxylase (AccC) and two subunits each of ACCase subunit alpha (AccA) and ACCase subunit beta (AccD). It depends on Zn(2+) as a cofactor.

It localises to the cytoplasm. The enzyme catalyses N(6)-carboxybiotinyl-L-lysyl-[protein] + acetyl-CoA = N(6)-biotinyl-L-lysyl-[protein] + malonyl-CoA. It functions in the pathway lipid metabolism; malonyl-CoA biosynthesis; malonyl-CoA from acetyl-CoA: step 1/1. In terms of biological role, component of the acetyl coenzyme A carboxylase (ACC) complex. Biotin carboxylase (BC) catalyzes the carboxylation of biotin on its carrier protein (BCCP) and then the CO(2) group is transferred by the transcarboxylase to acetyl-CoA to form malonyl-CoA. The polypeptide is Acetyl-coenzyme A carboxylase carboxyl transferase subunit beta (Stutzerimonas stutzeri (strain A1501) (Pseudomonas stutzeri)).